The primary structure comprises 248 residues: 5'-nucleotidase SurE (248 aa).

Positions 8, 9, 39, and 91 each coordinate a divalent metal cation.

This sequence belongs to the SurE nucleotidase family. A divalent metal cation serves as cofactor.

Its subcellular location is the cytoplasm. It catalyses the reaction a ribonucleoside 5'-phosphate + H2O = a ribonucleoside + phosphate. Its function is as follows. Nucleotidase that shows phosphatase activity on nucleoside 5'-monophosphates. The sequence is that of 5'-nucleotidase SurE from Neisseria meningitidis serogroup A / serotype 4A (strain DSM 15465 / Z2491).